The primary structure comprises 338 residues: Glycerol-1-phosphate dehydrogenase [NAD(P)+] (338 aa).

Residues G81–D85 and T103–S106 each bind NAD(+). D108 is a substrate binding site. An NAD(+)-binding site is contributed by S112. D157 is a binding site for substrate. Zn(2+) contacts are provided by D157 and H238. H242 contacts substrate. A Zn(2+)-binding site is contributed by H256.

The protein belongs to the glycerol-1-phosphate dehydrogenase family. In terms of assembly, homodimer. Zn(2+) is required as a cofactor.

The protein resides in the cytoplasm. It catalyses the reaction sn-glycerol 1-phosphate + NAD(+) = dihydroxyacetone phosphate + NADH + H(+). It carries out the reaction sn-glycerol 1-phosphate + NADP(+) = dihydroxyacetone phosphate + NADPH + H(+). The protein operates within membrane lipid metabolism; glycerophospholipid metabolism. Functionally, catalyzes the NAD(P)H-dependent reduction of dihydroxyacetonephosphate (DHAP or glycerone phosphate) to glycerol 1-phosphate (G1P). The G1P thus generated is used as the glycerophosphate backbone of phospholipids in the cellular membranes of Archaea. This Pyrobaculum calidifontis (strain DSM 21063 / JCM 11548 / VA1) protein is Glycerol-1-phosphate dehydrogenase [NAD(P)+].